The chain runs to 279 residues: Movement protein (279 aa).

Positions 246-279 (SESEELNVESPPAAIGSSSASRSEAFRPQVVNGL) are disordered. The segment covering 254–268 (ESPPAAIGSSSASRS) has biased composition (low complexity).

Belongs to the cucumovirus movement protein family.

Its subcellular location is the host cell junction. The protein resides in the host plasmodesma. Functionally, transports viral genome to neighboring plant cells directly through plasmosdesmata, without any budding. The movement protein allows efficient cell to cell propagation, by bypassing the host cell wall barrier. Acts by forming a tubular structure at the host plasmodesmata, enlarging it enough to allow free passage of virion capsids. This chain is Movement protein, found in Cucumber mosaic virus (strain N) (CMV).